Here is a 168-residue protein sequence, read N- to C-terminus: MTDVTVERIDTLKTGDLHDLCDAADDAVKAGGGFGWVAPPAREIMERYWKGVLVVPERILFVGRLDGVIAGSAQLVKPARNNEAQAHAATLTTSFVAPWARCHGLARRLTVAVEEEARASGFRVLNLDVRETQRRQPSRCTRIWASAVGARIPSMRWWTAKGWPDISM.

The region spanning 7–168 (ERIDTLKTGD…TAKGWPDISM (162 aa)) is the N-acetyltransferase domain.

This is an uncharacterized protein from Azospirillum brasilense.